A 300-amino-acid chain; its full sequence is uncharacterized protein (300 aa).

Residues 1 to 11 (MYNEGVTSPSQ) show a composition bias toward polar residues. Residues 1–20 (MYNEGVTSPSQLARKKNATD) form a disordered region. Positions 1 to 92 (MYNEGVTSPS…QEILITRKRR (92 aa)) form a DNA-binding region, recombinase. A coiled-coil region spans residues 162 to 249 (SKENYFKELS…DLEFQKIEKE (88 aa)).

This is an uncharacterized protein from Bacillus subtilis (strain 168).